Here is a 114-residue protein sequence, read N- to C-terminus: T cell receptor beta variable 4-3 (114 aa).

The signal sequence occupies residues 1-21 (MGCRLLCCAVLCLLGAVPMET). Residues 22–114 (GVTQTPRHLV…SALYLCASSQ (93 aa)) enclose the Ig-like domain. Cysteines 42 and 110 form a disulfide. N-linked (GlcNAc...) asparagine glycosylation is found at Asn-76 and Asn-89.

As to quaternary structure, alpha-beta TR is a heterodimer composed of an alpha and beta chain; disulfide-linked. The alpha-beta TR is associated with the transmembrane signaling CD3 coreceptor proteins to form the TR-CD3 (TcR or TCR). The assembly of alpha-beta TR heterodimers with CD3 occurs in the endoplasmic reticulum where a single alpha-beta TR heterodimer associates with one CD3D-CD3E heterodimer, one CD3G-CD3E heterodimer and one CD247 homodimer forming a stable octameric structure. CD3D-CD3E and CD3G-CD3E heterodimers preferentially associate with TR alpha and TR beta chains, respectively. The association of the CD247 homodimer is the last step of TcR assembly in the endoplasmic reticulum and is required for transport to the cell surface.

The protein localises to the cell membrane. V region of the variable domain of T cell receptor (TR) beta chain that participates in the antigen recognition. Alpha-beta T cell receptors are antigen specific receptors which are essential to the immune response and are present on the cell surface of T lymphocytes. Recognize peptide-major histocompatibility (MH) (pMH) complexes that are displayed by antigen presenting cells (APC), a prerequisite for efficient T cell adaptive immunity against pathogens. Binding of alpha-beta TR to pMH complex initiates TR-CD3 clustering on the cell surface and intracellular activation of LCK that phosphorylates the ITAM motifs of CD3G, CD3D, CD3E and CD247 enabling the recruitment of ZAP70. In turn ZAP70 phosphorylates LAT, which recruits numerous signaling molecules to form the LAT signalosome. The LAT signalosome propagates signal branching to three major signaling pathways, the calcium, the mitogen-activated protein kinase (MAPK) kinase and the nuclear factor NF-kappa-B (NF-kB) pathways, leading to the mobilization of transcription factors that are critical for gene expression and essential for T cell growth and differentiation. The T cell repertoire is generated in the thymus, by V-(D)-J rearrangement. This repertoire is then shaped by intrathymic selection events to generate a peripheral T cell pool of self-MH restricted, non-autoaggressive T cells. Post-thymic interaction of alpha-beta TR with the pMH complexes shapes TR structural and functional avidity. The protein is T cell receptor beta variable 4-3 of Homo sapiens (Human).